A 134-amino-acid polypeptide reads, in one-letter code: Large-conductance mechanosensitive channel (134 aa).

2 helical membrane passes run 15-35 and 80-100; these read IDLA…QSVV and GNFI…FLAV.

Belongs to the MscL family. Homopentamer.

The protein resides in the cell inner membrane. Channel that opens in response to stretch forces in the membrane lipid bilayer. May participate in the regulation of osmotic pressure changes within the cell. This Methylocella silvestris (strain DSM 15510 / CIP 108128 / LMG 27833 / NCIMB 13906 / BL2) protein is Large-conductance mechanosensitive channel.